The following is a 711-amino-acid chain: 1,4-alpha-glucan-branching enzyme (711 aa).

(1,4-alpha-D-glucosyl)n-binding residues include tryptophan 98 and lysine 135. The active-site Nucleophile is the aspartate 353. Glutamate 414 (proton donor) is an active-site residue.

It belongs to the glycosyl hydrolase 13 family. GlgB subfamily.

It localises to the cytoplasm. The catalysed reaction is Transfers a segment of a (1-&gt;4)-alpha-D-glucan chain to a primary hydroxy group in a similar glucan chain.. It participates in glycan biosynthesis; glycogen biosynthesis. In terms of biological role, glycogen-branching enzyme participates in the glycogen biosynthetic process along with glycogenin and glycogen synthase. Generates alpha-1,6-glucosidic branches from alpha-1,4-linked glucose chains, to increase solubility of the glycogen polymer. The sequence is that of 1,4-alpha-glucan-branching enzyme (GLC3) from Debaryomyces hansenii (strain ATCC 36239 / CBS 767 / BCRC 21394 / JCM 1990 / NBRC 0083 / IGC 2968) (Yeast).